A 37-amino-acid polypeptide reads, in one-letter code: Large ribosomal subunit protein bL36 (37 aa).

It belongs to the bacterial ribosomal protein bL36 family.

In Heliobacterium modesticaldum (strain ATCC 51547 / Ice1), this protein is Large ribosomal subunit protein bL36.